A 103-amino-acid chain; its full sequence is Small ribosomal subunit protein uS10 (103 aa).

This sequence belongs to the universal ribosomal protein uS10 family. Part of the 30S ribosomal subunit.

Its function is as follows. Involved in the binding of tRNA to the ribosomes. This chain is Small ribosomal subunit protein uS10, found in Borreliella burgdorferi (strain ATCC 35210 / DSM 4680 / CIP 102532 / B31) (Borrelia burgdorferi).